Reading from the N-terminus, the 284-residue chain is Protease HtpX homolog (284 aa).

2 consecutive transmembrane segments (helical) span residues 7-26 and 33-47; these read TYLL…MMLH and IILA…YYMS. Histidine 129 provides a ligand contact to Zn(2+). The active site involves glutamate 130. Histidine 133 contacts Zn(2+). The next 2 helical transmembrane spans lie at 148–168 and 180–200; these read LAGA…IFFV and IGTI…QFAI. Glutamate 205 serves as a coordination point for Zn(2+).

This sequence belongs to the peptidase M48B family. Requires Zn(2+) as cofactor.

The protein resides in the cell membrane. The polypeptide is Protease HtpX homolog (Methanocaldococcus jannaschii (strain ATCC 43067 / DSM 2661 / JAL-1 / JCM 10045 / NBRC 100440) (Methanococcus jannaschii)).